The following is a 387-amino-acid chain: EARP and GARP complex-interacting protein 1 (387 aa).

The residue at position 1 (Met1) is an N-acetylmethionine. WD repeat units lie at residues 4–48, 55–101, 124–164, 172–214, 219–258, and 263–302; these read DAPV…IIDF, INKN…VWRM, ELLC…LWDL, VLAS…GWDT, QIYC…FWDT, and EPVK…LSNM. A disordered region spans residues 310 to 335; sequence FGHLVDDDDISDQEDHRSEEKSKEPL. Ser320 carries the phosphoserine modification. Over residues 322–335 the composition is skewed to basic and acidic residues; the sequence is QEDHRSEEKSKEPL. One copy of the WD 7 repeat lies at 338-379; it reads NVIATYEEHEDSVYAVDWSSADPWLFASLSYDGRLVINRVPR.

It belongs to the WD repeat EIPR1 family. In terms of assembly, interacts with two multisubunit tethering complexes: EARP composed of VPS50, VPS51, VPS52 and VPS53 subunits and GARP complex composed of VPS51, VPS52, VPS53 and VPS54 subunits. Interacts with SNAP29.

The protein resides in the golgi apparatus. Its subcellular location is the trans-Golgi network. In terms of biological role, acts as a component of endosomal retrieval machinery that is involved in protein transport from early endosomes to either recycling endosomes or the trans-Golgi network. Mediates the recruitment of Golgi-associated retrograde protein (GARP) complex to the trans-Golgi network and controls early endosome-to-Golgi transport of internalized protein. Promotes the recycling of internalized transferrin receptor (TFRC) to the plasma membrane through interaction with endosome-associated recycling protein (EARP) complex. Controls proper insulin distribution and secretion, and retention of cargo in mature dense core vesicles. Required for the stability of the endosome-associated retrograde protein (EARP) complex subunits and for proper localization and association of EARP with membranes. This is EARP and GARP complex-interacting protein 1 from Homo sapiens (Human).